The chain runs to 199 residues: Alpha-D-glucose 1-phosphate phosphatase YihX (199 aa).

Aspartate 6 functions as the Nucleophile in the catalytic mechanism. Mg(2+) is bound at residue aspartate 6. Residues 6–8 (DLG), 107–108 (SN), lysine 141, and aspartate 166 contribute to the substrate site. Residue aspartate 166 participates in Mg(2+) binding.

The protein belongs to the HAD-like hydrolase superfamily. YihX family. The cofactor is Mg(2+). Mn(2+) serves as cofactor. Requires Co(2+) as cofactor. It depends on Zn(2+) as a cofactor.

The catalysed reaction is alpha-D-glucose 1-phosphate + H2O = D-glucose + phosphate. Catalyzes the dephosphorylation of alpha-D-glucose 1-phosphate (Glc1P) and, to a lesser extent, of other sugar phosphates. Has no activity with the beta form of Glc1P. In addition, YihX has significant phosphatase activity against pyridoxal phosphate (PLP) and low beta-phosphoglucomutase activity. This Escherichia coli (strain K12) protein is Alpha-D-glucose 1-phosphate phosphatase YihX (yihX).